The chain runs to 151 residues: D-aminoacyl-tRNA deacylase (151 aa).

The Gly-cisPro motif, important for rejection of L-amino acids signature appears at 142–143 (GP).

It belongs to the DTD family. As to quaternary structure, homodimer.

It is found in the cytoplasm. The enzyme catalyses glycyl-tRNA(Ala) + H2O = tRNA(Ala) + glycine + H(+). The catalysed reaction is a D-aminoacyl-tRNA + H2O = a tRNA + a D-alpha-amino acid + H(+). An aminoacyl-tRNA editing enzyme that deacylates mischarged D-aminoacyl-tRNAs. Also deacylates mischarged glycyl-tRNA(Ala), protecting cells against glycine mischarging by AlaRS. Acts via tRNA-based rather than protein-based catalysis; rejects L-amino acids rather than detecting D-amino acids in the active site. By recycling D-aminoacyl-tRNA to D-amino acids and free tRNA molecules, this enzyme counteracts the toxicity associated with the formation of D-aminoacyl-tRNA entities in vivo and helps enforce protein L-homochirality. In Psychrobacter arcticus (strain DSM 17307 / VKM B-2377 / 273-4), this protein is D-aminoacyl-tRNA deacylase.